A 337-amino-acid chain; its full sequence is DNA-directed RNA polymerase subunit alpha (337 aa).

The tract at residues 1–233 (MIQKNWQELI…DQLSIFVNFE (233 aa)) is alpha N-terminal domain (alpha-NTD). An alpha C-terminal domain (alpha-CTD) region spans residues 249–337 (FNPALLKKVD…DLAKRYEDQY (89 aa)).

Belongs to the RNA polymerase alpha chain family. Homodimer. The RNAP catalytic core consists of 2 alpha, 1 beta, 1 beta' and 1 omega subunit. When a sigma factor is associated with the core the holoenzyme is formed, which can initiate transcription.

It catalyses the reaction RNA(n) + a ribonucleoside 5'-triphosphate = RNA(n+1) + diphosphate. In terms of biological role, DNA-dependent RNA polymerase catalyzes the transcription of DNA into RNA using the four ribonucleoside triphosphates as substrates. This chain is DNA-directed RNA polymerase subunit alpha, found in Brucella abortus (strain S19).